Reading from the N-terminus, the 356-residue chain is Butyrate kinase (356 aa).

This sequence belongs to the acetokinase family.

The protein localises to the cytoplasm. It catalyses the reaction butanoate + ATP = butanoyl phosphate + ADP. The protein operates within lipid metabolism; butanoate metabolism. In terms of biological role, catalyzes the conversion of butyryl-CoA through butyryl phosphate to butyrate. This chain is Butyrate kinase, found in Clostridium tetani (strain Massachusetts / E88).